We begin with the raw amino-acid sequence, 156 residues long: Small ribosomal subunit protein uS7 (156 aa).

Belongs to the universal ribosomal protein uS7 family. In terms of assembly, part of the 30S ribosomal subunit. Contacts proteins S9 and S11.

Functionally, one of the primary rRNA binding proteins, it binds directly to 16S rRNA where it nucleates assembly of the head domain of the 30S subunit. Is located at the subunit interface close to the decoding center, probably blocks exit of the E-site tRNA. This Myxococcus xanthus (strain DK1622) protein is Small ribosomal subunit protein uS7.